We begin with the raw amino-acid sequence, 343 residues long: Probable 4-hydroxy-tetrahydrodipicolinate reductase 1, chloroplastic (343 aa).

The N-terminal 14 residues, 1 to 14 (MLASTFATHPAAAA), are a transit peptide targeting the chloroplast. Residues 167-169 (GTT) and 190-193 (SPQM) each bind NAD(+). H226 serves as the catalytic Proton donor/acceptor. K230 serves as the catalytic Proton donor. Residue 235–236 (GT) participates in (S)-2,3,4,5-tetrahydrodipicolinate binding.

The protein belongs to the DapB family.

The protein localises to the plastid. It is found in the chloroplast. The enzyme catalyses (S)-2,3,4,5-tetrahydrodipicolinate + NAD(+) + H2O = (2S,4S)-4-hydroxy-2,3,4,5-tetrahydrodipicolinate + NADH + H(+). The catalysed reaction is (S)-2,3,4,5-tetrahydrodipicolinate + NADP(+) + H2O = (2S,4S)-4-hydroxy-2,3,4,5-tetrahydrodipicolinate + NADPH + H(+). The protein operates within amino-acid biosynthesis; L-lysine biosynthesis via DAP pathway; (S)-tetrahydrodipicolinate from L-aspartate: step 4/4. Catalyzes the conversion of 4-hydroxy-tetrahydrodipicolinate (HTPA) to tetrahydrodipicolinate. This chain is Probable 4-hydroxy-tetrahydrodipicolinate reductase 1, chloroplastic (DAPB1), found in Oryza sativa subsp. japonica (Rice).